A 248-amino-acid chain; its full sequence is Mannose-binding protein C (248 aa).

The first 20 residues, 1-20 (MSLFPSLTLLLLSVVATSYS), serve as a signal peptide directing secretion. The 58-residue stretch at 42-99 (GINGFPGKDGRDGTKGEKGEPGQGLRGLQGPPGKLGPPGNPGSSGSPGPKGQKGDPGE) folds into the Collagen-like domain. A disordered region spans residues 43 to 111 (INGFPGKDGR…DCESSLAASE (69 aa)). The residue at position 47 (Pro-47) is a 4-hydroxyproline. Basic and acidic residues predominate over residues 49–61 (KDGRDGTKGEKGE). A 4-hydroxyproline mark is found at Pro-73, Pro-79, Pro-82, and Pro-88. Over residues 82-91 (PGSSGSPGPK) the composition is skewed to low complexity. Residues 112 to 130 (RKALQTEMARIKKWLTFSL) adopt a coiled-coil conformation. Residues 134–245 (VGNKFFLTNG…CSSSHLALCE (112 aa)) enclose the C-type lectin domain. Disulfide bonds link Cys-155–Cys-244 and Cys-222–Cys-236.

In terms of assembly, oligomeric complex of 3 or more homotrimers. Interacts with MASP1 and MASP2. Interacts with MEP1A and MEP1B and may inhibit their catalytic activity. Hydroxylation on proline residues within the sequence motif, GXPG, is most likely to be 4-hydroxy as this fits the requirement for 4-hydroxylation in vertebrates.

Its subcellular location is the secreted. Calcium-dependent lectin involved in innate immune defense. Binds mannose, fucose and N-acetylglucosamine on different microorganisms and activates the lectin complement pathway. Binds to late apoptotic cells, as well as to apoptotic blebs and to necrotic cells, but not to early apoptotic cells, facilitating their uptake by macrophages. The protein is Mannose-binding protein C (MBL2) of Macaca fascicularis (Crab-eating macaque).